An 83-amino-acid polypeptide reads, in one-letter code: Cytochrome b559 subunit alpha (83 aa).

The helical transmembrane segment at 21–35 threads the bilayer; that stretch reads VIHSITIPSLFIAGW. A heme-binding site is contributed by His-23.

It belongs to the PsbE/PsbF family. In terms of assembly, heterodimer of an alpha subunit and a beta subunit. PSII is composed of 1 copy each of membrane proteins PsbA, PsbB, PsbC, PsbD, PsbE, PsbF, PsbH, PsbI, PsbJ, PsbK, PsbL, PsbM, PsbT, PsbX, PsbY, PsbZ, Psb30/Ycf12, at least 3 peripheral proteins of the oxygen-evolving complex and a large number of cofactors. It forms dimeric complexes. Heme b is required as a cofactor.

It is found in the plastid. It localises to the chloroplast thylakoid membrane. Its function is as follows. This b-type cytochrome is tightly associated with the reaction center of photosystem II (PSII). PSII is a light-driven water:plastoquinone oxidoreductase that uses light energy to abstract electrons from H(2)O, generating O(2) and a proton gradient subsequently used for ATP formation. It consists of a core antenna complex that captures photons, and an electron transfer chain that converts photonic excitation into a charge separation. This Zygnema circumcarinatum (Green alga) protein is Cytochrome b559 subunit alpha.